Reading from the N-terminus, the 357-residue chain is DNA replication and repair protein RecF (357 aa).

An ATP-binding site is contributed by 30-37 (GANGSGKT).

This sequence belongs to the RecF family.

The protein resides in the cytoplasm. Functionally, the RecF protein is involved in DNA metabolism; it is required for DNA replication and normal SOS inducibility. RecF binds preferentially to single-stranded, linear DNA. It also seems to bind ATP. In Cronobacter sakazakii (strain ATCC BAA-894) (Enterobacter sakazakii), this protein is DNA replication and repair protein RecF.